Consider the following 565-residue polypeptide: Periplasmic trehalase (565 aa).

Positions Met-1 to Ala-30 are cleaved as a signal peptide. Substrate contacts are provided by residues Arg-152, Trp-159–Asp-160, Asn-196, Arg-205–Gln-207, Arg-277–Glu-279, and Gly-310. Catalysis depends on proton donor/acceptor residues Asp-312 and Glu-496. Glu-511 is a binding site for substrate. Residues Cys-539–Pro-565 are disordered.

The protein belongs to the glycosyl hydrolase 37 family. Monomer.

Its subcellular location is the periplasm. The enzyme catalyses alpha,alpha-trehalose + H2O = alpha-D-glucose + beta-D-glucose. In terms of biological role, provides the cells with the ability to utilize trehalose at high osmolarity by splitting it into glucose molecules that can subsequently be taken up by the phosphotransferase-mediated uptake system. This Escherichia coli O1:K1 / APEC protein is Periplasmic trehalase.